We begin with the raw amino-acid sequence, 200 residues long: Probable GTP-binding protein EngB (200 aa).

The 176-residue stretch at aspartate 22 to glutamate 197 folds into the EngB-type G domain. GTP contacts are provided by residues glycine 30–serine 37, glycine 57–leucine 61, aspartate 78–glycine 81, threonine 145–aspartate 148, and phenylalanine 176–alanine 178. The Mg(2+) site is built by serine 37 and threonine 59.

The protein belongs to the TRAFAC class TrmE-Era-EngA-EngB-Septin-like GTPase superfamily. EngB GTPase family. The cofactor is Mg(2+).

Its function is as follows. Necessary for normal cell division and for the maintenance of normal septation. The polypeptide is Probable GTP-binding protein EngB (Trichlorobacter lovleyi (strain ATCC BAA-1151 / DSM 17278 / SZ) (Geobacter lovleyi)).